Consider the following 110-residue polypeptide: Ribonuclease P protein component 4 (110 aa).

C65, C68, C94, and C97 together coordinate Zn(2+).

Belongs to the eukaryotic/archaeal RNase P protein component 4 family. In terms of assembly, consists of a catalytic RNA component and at least 4-5 protein subunits. The cofactor is Zn(2+).

Its subcellular location is the cytoplasm. The enzyme catalyses Endonucleolytic cleavage of RNA, removing 5'-extranucleotides from tRNA precursor.. In terms of biological role, part of ribonuclease P, a protein complex that generates mature tRNA molecules by cleaving their 5'-ends. The chain is Ribonuclease P protein component 4 from Methanococcus maripaludis (strain C5 / ATCC BAA-1333).